Reading from the N-terminus, the 77-residue chain is Small ribosomal subunit protein bS18 (77 aa).

This sequence belongs to the bacterial ribosomal protein bS18 family. Part of the 30S ribosomal subunit. Forms a tight heterodimer with protein bS6.

Functionally, binds as a heterodimer with protein bS6 to the central domain of the 16S rRNA, where it helps stabilize the platform of the 30S subunit. The sequence is that of Small ribosomal subunit protein bS18 from Desulforamulus reducens (strain ATCC BAA-1160 / DSM 100696 / MI-1) (Desulfotomaculum reducens).